The sequence spans 97 residues: Acylphosphatase (97 aa).

Residues 9–95 (TRHLRIHGLV…CDAQGFEQRE (87 aa)) form the Acylphosphatase-like domain. Active-site residues include Arg24 and Asn42.

This sequence belongs to the acylphosphatase family.

The enzyme catalyses an acyl phosphate + H2O = a carboxylate + phosphate + H(+). In Acidovorax sp. (strain JS42), this protein is Acylphosphatase (acyP).